The chain runs to 385 residues: 4-hydroxy-3-methylbut-2-en-1-yl diphosphate synthase (flavodoxin) 2 (385 aa).

Positions 281, 284, 316, and 323 each coordinate [4Fe-4S] cluster.

The protein belongs to the IspG family. It depends on [4Fe-4S] cluster as a cofactor.

The enzyme catalyses (2E)-4-hydroxy-3-methylbut-2-enyl diphosphate + oxidized [flavodoxin] + H2O + 2 H(+) = 2-C-methyl-D-erythritol 2,4-cyclic diphosphate + reduced [flavodoxin]. Its pathway is isoprenoid biosynthesis; isopentenyl diphosphate biosynthesis via DXP pathway; isopentenyl diphosphate from 1-deoxy-D-xylulose 5-phosphate: step 5/6. Converts 2C-methyl-D-erythritol 2,4-cyclodiphosphate (ME-2,4cPP) into 1-hydroxy-2-methyl-2-(E)-butenyl 4-diphosphate. This Streptomyces avermitilis (strain ATCC 31267 / DSM 46492 / JCM 5070 / NBRC 14893 / NCIMB 12804 / NRRL 8165 / MA-4680) protein is 4-hydroxy-3-methylbut-2-en-1-yl diphosphate synthase (flavodoxin) 2.